Consider the following 305-residue polypeptide: MSVSVAAEHDYIGLSEFPTMEATTMSDKTKTRDNNNGLNFKATELRLGLPGSESPERVDSRFLALNKSSCPVSGAKRVFSDAINDSNKWVFSPGSTTATGDVGSGSGPRTSVVKDGKSTTFTKPAVPVKEKKSSATAPASKAQVVGWPPIRSFRKNSMASSQSQKPGNNSETEEAEAKSGPEQPCLYVKVSMEGAPYLRKIDLKTYKSYLELSSALEKMFSCFTIGQFGSHGGCGRDGLNESRLTDLLRGSEYVVTYEDKDSDWMLVGDVPWEMFICSCKKLRIMKSSEAIGLAPRVMEKCRSRN.

Positions 45 to 49 match the EAR-like (transcriptional repression) motif; that stretch reads LRLGL. Disordered stretches follow at residues 96–119 and 155–180; these read TTAT…GKST and KNSM…AKSG. Residues 155 to 170 show a composition bias toward polar residues; it reads KNSMASSQSQKPGNNS. In terms of domain architecture, PB1 spans 185-287; sequence CLYVKVSMEG…SCKKLRIMKS (103 aa).

It belongs to the Aux/IAA family. In terms of assembly, homodimers and heterodimers. Interacts with phytochrome A. Interacts with TPL.

The protein resides in the nucleus. Its function is as follows. Aux/IAA proteins are short-lived transcriptional factors that function as repressors of early auxin response genes at low auxin concentrations. Repression is thought to result from the interaction with auxin response factors (ARFs), proteins that bind to the auxin-responsive promoter element (AuxRE). Formation of heterodimers with ARF proteins may alter their ability to modulate early auxin response genes expression. The chain is Auxin-responsive protein IAA27 (IAA27) from Arabidopsis thaliana (Mouse-ear cress).